The sequence spans 87 residues: UPF0250 protein Spro_1197 (87 aa).

It belongs to the UPF0250 family.

This chain is UPF0250 protein Spro_1197, found in Serratia proteamaculans (strain 568).